A 496-amino-acid chain; its full sequence is Deoxyribodipyrimidine photo-lyase (496 aa).

Residues 28–160 (GPVVYWMFRD…EVDAHNVVPM (133 aa)) form the Photolyase/cryptochrome alpha/beta domain. Residues Tyr256, 269–273 (LSGLS), 307–315 (ELIVRRELS), and 415–417 (DGR) each bind FAD. Glu307 provides a ligand contact to DNA.

Belongs to the DNA photolyase class-2 family. The cofactor is FAD. In terms of tissue distribution, highly expressed in flowers. Expressed in roots and stems.

The protein resides in the nucleus. It carries out the reaction cyclobutadipyrimidine (in DNA) = 2 pyrimidine residues (in DNA).. In terms of biological role, involved in repair of UV radiation-induced DNA damage. Catalyzes the light-dependent monomerization (300-600 nm) of cyclobutylpyrimidine dimers (CPDs), which are formed between adjacent bases on the same DNA strand upon exposure to ultraviolet radiation. Required for plant survival in the presence of UV-B light. Not involved in the repair of (6-4) photoproducts. The protein is Deoxyribodipyrimidine photo-lyase (PHR1) of Arabidopsis thaliana (Mouse-ear cress).